Consider the following 309-residue polypeptide: L-2-keto-3-deoxyarabonate dehydratase (309 aa).

The Schiff-base intermediate with substrate role is filled by lysine 171.

It belongs to the DapA family. As to quaternary structure, homodimer.

The enzyme catalyses 2-dehydro-3-deoxy-L-arabinonate = 2,5-dioxopentanoate + H2O. Catalyzes the dehydration of L-2-keto-3-deoxyarabonate (L-KDA) to alpha-ketoglutaric semialdehyde (alphaKGSA). Is involved in a degradation pathway of L-arabinose that allows A.brasilense to grow on L-arabinose as a sole carbon source. This chain is L-2-keto-3-deoxyarabonate dehydratase (araD), found in Azospirillum brasilense.